The following is a 299-amino-acid chain: Taste receptor type 2 member 45 (299 aa).

M1 is a topological domain (extracellular). The helical transmembrane segment at 2–22 (ITFLPIIFSILVVVTFVIGNF) threads the bilayer. Topologically, residues 23–55 (ANGFIALVNSTEWVKRQKISFADQIVTALAVSR) are cytoplasmic. The helical transmembrane segment at 56–76 (VGLLWVLLLNWYSTVLNPAFC) threads the bilayer. Residues 77-98 (SVELRTTAYNIWAVTGHFSNWP) are Extracellular-facing. A helical membrane pass occupies residues 99-119 (ATSLSIFYLLKIANFSNLIFL). Over 120–126 (RLKRRVK) the chain is Cytoplasmic. The helical transmembrane segment at 127 to 147 (SVILVVLLGPLLFLACHLFVV) threads the bilayer. Topologically, residues 148-178 (NMNQIVWTKEYEGNMTWKIKLRRAMYLSDTT) are extracellular. A glycan (N-linked (GlcNAc...) asparagine) is linked at N161. Residues 179-199 (VTMLANLVPFTVTLISFLLLV) traverse the membrane as a helical segment. Residues 200–229 (CSLCKHLKKMQLHGKGSQDPSTKVHIKVLQ) lie on the Cytoplasmic side of the membrane. The helical transmembrane segment at 230-250 (TVISFFLLRAIYFVSVIISVW) threads the bilayer. At 251-259 (SFKNLENKP) the chain is on the extracellular side. A helical membrane pass occupies residues 260 to 280 (VFMFCQAIGFSCSSAHPFILI). Over 281-299 (WGNKKLKQTYLSVLWQMRY) the chain is Cytoplasmic.

It belongs to the G-protein coupled receptor T2R family. As to expression, expressed in subsets of taste receptor cells of the tongue and exclusively in gustducin-positive cells.

The protein localises to the membrane. Functionally, receptor that may play a role in the perception of bitterness and is gustducin-linked. May play a role in sensing the chemical composition of the gastrointestinal content. The activity of this receptor may stimulate alpha gustducin, mediate PLC-beta-2 activation and lead to the gating of TRPM5. In Homo sapiens (Human), this protein is Taste receptor type 2 member 45 (TAS2R45).